The sequence spans 451 residues: tRNA-2-methylthio-N(6)-dimethylallyladenosine synthase (451 aa).

In terms of domain architecture, MTTase N-terminal spans 11–127 (RHYHITTFGC…LEDLLQQVFD (117 aa)). [4Fe-4S] cluster contacts are provided by Cys20, Cys56, Cys90, Cys162, Cys166, and Cys169. In terms of domain architecture, Radical SAM core spans 148–385 (RDSTITAWVN…NHLVAQKAAE (238 aa)). One can recognise a TRAM domain in the interval 388–451 (QRYLGRIEEV…RAFSLTGEIV (64 aa)).

It belongs to the methylthiotransferase family. MiaB subfamily. In terms of assembly, monomer. It depends on [4Fe-4S] cluster as a cofactor.

The protein localises to the cytoplasm. The catalysed reaction is N(6)-dimethylallyladenosine(37) in tRNA + (sulfur carrier)-SH + AH2 + 2 S-adenosyl-L-methionine = 2-methylsulfanyl-N(6)-dimethylallyladenosine(37) in tRNA + (sulfur carrier)-H + 5'-deoxyadenosine + L-methionine + A + S-adenosyl-L-homocysteine + 2 H(+). Functionally, catalyzes the methylthiolation of N6-(dimethylallyl)adenosine (i(6)A), leading to the formation of 2-methylthio-N6-(dimethylallyl)adenosine (ms(2)i(6)A) at position 37 in tRNAs that read codons beginning with uridine. The protein is tRNA-2-methylthio-N(6)-dimethylallyladenosine synthase of Rippkaea orientalis (strain PCC 8801 / RF-1) (Cyanothece sp. (strain PCC 8801)).